Here is a 124-residue protein sequence, read N- to C-terminus: CBS domain-containing protein MJ0729 (124 aa).

CBS domains are found at residues 10–67 and 70–124; these read MNKD…IEDL and LIDE…YKNR.

In terms of assembly, exhibits a pH-dependent oligomerization state: at pH 7, the dominant species is a dimer, where each monomer is a two-CBS domain protein, and at pH 4.5-4.8, the dominant species is a tetramer, with an oblong shape. At pH 2.5, there is formation of intermolecular hydrogen bonds, suggesting the presence of high-molecular weight species. The physiological dimeric species is thermal and chemically very stable.

This Methanocaldococcus jannaschii (strain ATCC 43067 / DSM 2661 / JAL-1 / JCM 10045 / NBRC 100440) (Methanococcus jannaschii) protein is CBS domain-containing protein MJ0729.